The chain runs to 418 residues: Gamma-glutamyl phosphate reductase (418 aa).

Belongs to the gamma-glutamyl phosphate reductase family.

It is found in the cytoplasm. It catalyses the reaction L-glutamate 5-semialdehyde + phosphate + NADP(+) = L-glutamyl 5-phosphate + NADPH + H(+). The protein operates within amino-acid biosynthesis; L-proline biosynthesis; L-glutamate 5-semialdehyde from L-glutamate: step 2/2. Functionally, catalyzes the NADPH-dependent reduction of L-glutamate 5-phosphate into L-glutamate 5-semialdehyde and phosphate. The product spontaneously undergoes cyclization to form 1-pyrroline-5-carboxylate. This is Gamma-glutamyl phosphate reductase from Lacticaseibacillus casei (strain BL23) (Lactobacillus casei).